The primary structure comprises 383 residues: Protein COS7 (383 aa).

At 1 to 42 (MKENEVKDEKSVDVLSFKQLESQKIVLPQDLFRSSFTWFCYE) the chain is on the cytoplasmic side. A helical membrane pass occupies residues 43-63 (IYKSLAFRIWMLLWLPLSVWW). The Extracellular segment spans residues 64–72 (KLSNNCIYP). Residues 73–93 (LIVSLLVLFLGPIFVLVICGL) traverse the membrane as a helical segment. Over 94 to 232 (SRKRSLSKQL…RSKLTWFLKR (139 aa)) the chain is Cytoplasmic. A helical membrane pass occupies residues 233–253 (IFTIYSLPLWLAFLNCICVSQ). Position 254 (His254) is a topological domain, extracellular. Residues 255–275 (FCLAFRILCPGLFFLMMVWLF) traverse the membrane as a helical segment. Residues 276–383 (QNMRTTALLV…SRNEESLMKK (108 aa)) are Cytoplasmic-facing.

It belongs to the DUP/COS family.

It is found in the membrane. The protein is Protein COS7 (COS7) of Saccharomyces cerevisiae (strain ATCC 204508 / S288c) (Baker's yeast).